The chain runs to 380 residues: Cytochrome b (380 aa).

4 helical membrane passes run 34–54, 78–99, 114–134, and 179–199; these read FGSL…LLAA, WLIR…YLHI, WNTG…GYVL, and FFTL…IHLT. 2 residues coordinate heme b: histidine 84 and histidine 98. Heme b-binding residues include histidine 183 and histidine 197. Histidine 202 lines the a ubiquinone pocket. A run of 4 helical transmembrane segments spans residues 227-247, 289-309, 321-341, and 348-368; these read LKDI…ALFS, LGGV…PLLH, FSQL…WVGS, and FIII…ILFP.

This sequence belongs to the cytochrome b family. In terms of assembly, the cytochrome bc1 complex contains 11 subunits: 3 respiratory subunits (MT-CYB, CYC1 and UQCRFS1), 2 core proteins (UQCRC1 and UQCRC2) and 6 low-molecular weight proteins (UQCRH/QCR6, UQCRB/QCR7, UQCRQ/QCR8, UQCR10/QCR9, UQCR11/QCR10 and a cleavage product of UQCRFS1). This cytochrome bc1 complex then forms a dimer. The cofactor is heme b.

Its subcellular location is the mitochondrion inner membrane. In terms of biological role, component of the ubiquinol-cytochrome c reductase complex (complex III or cytochrome b-c1 complex) that is part of the mitochondrial respiratory chain. The b-c1 complex mediates electron transfer from ubiquinol to cytochrome c. Contributes to the generation of a proton gradient across the mitochondrial membrane that is then used for ATP synthesis. In Antigone vipio (White-naped crane), this protein is Cytochrome b (MT-CYB).